A 281-amino-acid polypeptide reads, in one-letter code: Large ribosomal subunit protein uL22 (281 aa).

Positions 1 to 225 are large ribosomal subunit protein uL22; sequence MASPMGSTAS…KAGGAAEAEV (225 aa). 2 disordered regions span residues 137-175 and 199-281; these read RATK…PVAA and AVAS…GGTR. Residues 139–153 show a composition bias toward basic residues; sequence TKKAVPKGARHRRRL. Composition is skewed to low complexity over residues 159 to 175 and 199 to 239; these read PAAS…PVAA and AVAS…APAA. The tract at residues 226 to 281 is unknown; it reads ATTDEQTTETAPAAEAEKPAVRRPAARKSTTSARRRAAETEGHDSDAESTDEGGTR. A compositionally biased stretch (basic and acidic residues) spans 261-271; the sequence is RAAETEGHDSD. Acidic residues predominate over residues 272 to 281; sequence AESTDEGGTR.

It belongs to the universal ribosomal protein uL22 family. As to quaternary structure, part of the 50S ribosomal subunit.

Functionally, the globular domain of the protein is located near the polypeptide exit tunnel on the outside of the subunit, while an extended beta-hairpin is found that lines the wall of the exit tunnel in the center of the 70S ribosome. This protein binds specifically to 23S rRNA; its binding is stimulated by other ribosomal proteins, e.g. L4, L17, and L20. It is important during the early stages of 50S assembly. It makes multiple contacts with different domains of the 23S rRNA in the assembled 50S subunit and ribosome. This chain is Large ribosomal subunit protein uL22, found in Acidothermus cellulolyticus (strain ATCC 43068 / DSM 8971 / 11B).